A 488-amino-acid polypeptide reads, in one-letter code: Neisserial heparin binding antigen (488 aa).

The N-terminal stretch at 1–17 (MFKRSVIAMACIFALSA) is a signal peptide. A lipid anchor (N-palmitoyl cysteine) is attached at C18. C18 carries the S-diacylglycerol cysteine lipid modification. The segment at 21-201 (GGGGSPDVKS…NPAPANGGSN (181 aa)) is disordered. Residues 43-53 (SEKETEAKEDA) are compositionally biased toward basic and acidic residues. Positions 54 to 70 (PQAGSQGQGAPSAQGSQ) are enriched in low complexity. 2 stretches are compositionally biased toward polar residues: residues 101–118 (DMPQ…NHTP) and 127–142 (MENQ…QPAN). Positions 160–183 (AGGQNAGNTAAQGANQAGNNQAAG) are enriched in low complexity. Residues 296–306 (RFRRSARSRRS) carry the Arg-rich motif motif. A C1 fragment region spans residues 306–488 (SLPAEMPLIP…GVFAGKKEQD (183 aa)).

The protein belongs to the NHBA family. As to quaternary structure, the C-terminal beta-barrel forms a monomer. Post-translationally, cleaved in vivo by the Neisserial phase-variable autotransporter/serine protease NalP to give 2 fragments. The N-terminus remains in the cell outer membrane while the 22 kDa C-terminus (beginning on Ser-293) is soluble; this soluble fragment is called C2. Cleaved in vitro by human lactoferrin (LTF, between Arg-305 and Ser-306), this fragment is called C1. Cleavage by NalP or lactoferrin does not alter killing of Neisseria by bactericidal antibodies in vitro. Recombinant and cell surface protein is cleaved by human saliva kallikrein (KLK1) between Ser-303 and Arg-304; in saliva kallikrein is more active on NHBA than lactoferrin. Human plasma kallikrein (KLKB1) cleaves in a similar manner to KLK1.

It is found in the cell outer membrane. It localises to the cell surface. The protein resides in the host mitochondrion. In terms of biological role, a major human immunogenic protein detected in patients recovering from meningitidis, where it induces bactericidal antibodies. Binds heparin and heparan sulfate proteoglycan in vitro via the Arg-rich motif. Heparin-binding to this protein protects bacteria against killing by bactericidal antibodies (serum killing). Binds to human cells via the Arg-rich region; binding may require the intact protein as protein fragments do not bind to human cells. Protein binding to human cells is abolished by treatment with heparinase III but not chondroitinase ABC. The bacteria binds a number of human extracellular sialyated and/or sulfated glycans via this protein, including chondroitin sulfate (KD=5.2 nM), heparin (KD=52 nM) and ganglioside GT3 (KD=210 nM). The recombinant protein binds DNA non-specifically. Functionally, plays a role in extracellular-DNA (eDNA) mediated biofilm formation. In strain MC58 eDNA stimulates biofilm formation. When NHBA is not processed by NalP there is an increase in positively charged, NHBA- and IgA-derived DNA-binding peptides on the cell surface, resulting in increased DNA-binding peptides and increased biofilm formation. [C2 fragment] Localizes to host mitochondria when applied to the apical side of human endothelial cell layers, where it induces production of reactive oxygen species which lead to increased permeability of host endothelial cells. The C1 fragment (which lacks the first 14 residues of C2) does not have this effect. It is not known if this occurs during Neisseria infections. The polypeptide is Neisserial heparin binding antigen (Neisseria meningitidis serogroup B (strain ATCC BAA-335 / MC58)).